The following is a 118-amino-acid chain: uncharacterized protein (118 aa).

This is an uncharacterized protein from Clostridium perfringens.